The chain runs to 340 residues: 4-hydroxy-3-methylbut-2-enyl diphosphate reductase (340 aa).

Residue Cys-21 coordinates [4Fe-4S] cluster. (2E)-4-hydroxy-3-methylbut-2-enyl diphosphate-binding residues include His-50 and His-83. His-50 and His-83 together coordinate dimethylallyl diphosphate. Isopentenyl diphosphate-binding residues include His-50 and His-83. [4Fe-4S] cluster is bound at residue Cys-105. Residue His-133 coordinates (2E)-4-hydroxy-3-methylbut-2-enyl diphosphate. Residue His-133 coordinates dimethylallyl diphosphate. His-133 provides a ligand contact to isopentenyl diphosphate. The Proton donor role is filled by Glu-135. Residue Thr-173 coordinates (2E)-4-hydroxy-3-methylbut-2-enyl diphosphate. Residue Cys-203 participates in [4Fe-4S] cluster binding. (2E)-4-hydroxy-3-methylbut-2-enyl diphosphate contacts are provided by Ser-231, Ser-232, Asn-233, and Ser-276. Dimethylallyl diphosphate contacts are provided by Ser-231, Ser-232, Asn-233, and Ser-276. Isopentenyl diphosphate contacts are provided by Ser-231, Ser-232, Asn-233, and Ser-276. The disordered stretch occupies residues 320 to 340; the sequence is KARGEPLTRSATAGDRMNADR.

It belongs to the IspH family. The cofactor is [4Fe-4S] cluster.

It carries out the reaction isopentenyl diphosphate + 2 oxidized [2Fe-2S]-[ferredoxin] + H2O = (2E)-4-hydroxy-3-methylbut-2-enyl diphosphate + 2 reduced [2Fe-2S]-[ferredoxin] + 2 H(+). The enzyme catalyses dimethylallyl diphosphate + 2 oxidized [2Fe-2S]-[ferredoxin] + H2O = (2E)-4-hydroxy-3-methylbut-2-enyl diphosphate + 2 reduced [2Fe-2S]-[ferredoxin] + 2 H(+). It functions in the pathway isoprenoid biosynthesis; dimethylallyl diphosphate biosynthesis; dimethylallyl diphosphate from (2E)-4-hydroxy-3-methylbutenyl diphosphate: step 1/1. The protein operates within isoprenoid biosynthesis; isopentenyl diphosphate biosynthesis via DXP pathway; isopentenyl diphosphate from 1-deoxy-D-xylulose 5-phosphate: step 6/6. In terms of biological role, catalyzes the conversion of 1-hydroxy-2-methyl-2-(E)-butenyl 4-diphosphate (HMBPP) into a mixture of isopentenyl diphosphate (IPP) and dimethylallyl diphosphate (DMAPP). Acts in the terminal step of the DOXP/MEP pathway for isoprenoid precursor biosynthesis. The chain is 4-hydroxy-3-methylbut-2-enyl diphosphate reductase from Acidothermus cellulolyticus (strain ATCC 43068 / DSM 8971 / 11B).